A 1009-amino-acid polypeptide reads, in one-letter code: Protein-tyrosine kinase 2-beta (1009 aa).

In terms of domain architecture, FERM spans 39–359; it reads RILKVCFYSN…GYCRLQGEHK (321 aa). Residues serine 361, serine 375, and serine 399 each carry the phosphoserine modification. Position 402 is a phosphotyrosine; by autocatalysis (tyrosine 402). The Protein kinase domain maps to 425–683; that stretch reads VVLNRILGEG…ELVCSLSDIY (259 aa). ATP-binding positions include 431–439, lysine 457, and 503–509; these read LGEGFFGEV and ELYPYGE. The active-site Proton acceptor is the aspartate 549. 3 positions are modified to phosphotyrosine: tyrosine 579, tyrosine 580, and tyrosine 722. Positions 702–725 are disordered; that stretch reads PKILEPTAFQEPPPKPSRPKYKHP. Phosphoserine is present on serine 762. Threonine 765 carries the post-translational modification Phosphothreonine. The interaction with TGFB1I1 stretch occupies residues 801 to 1009; sequence KIKMRQVLDR…VANLAHPPAE (209 aa). Position 834 is a phosphotyrosine (tyrosine 834). Serine 839 carries the phosphoserine modification. Threonine 842 bears the Phosphothreonine mark. At tyrosine 849 the chain carries Phosphotyrosine. Position 866 is a phosphoserine (serine 866). The interval 868–1009 is focal adhesion targeting (FAT); it reads QPTANLDRTD…VANLAHPPAE (142 aa). Tyrosine 881 carries the post-translational modification Phosphotyrosine.

This sequence belongs to the protein kinase superfamily. Tyr protein kinase family. FAK subfamily. In terms of assembly, homodimer, or homooligomer. Interacts with NPHP1, ASAP1, ASAP2, ARHGAP26, SKAP2 and TGFB1I1. The Tyr-402 phosphorylated form interacts with SRC (via SH2 domain) and SRC family members. Forms a signaling complex with EPHA1, LCK and phosphatidylinositol 3-kinase; upon activation by EFNA1. Interacts with GRB2 (via SH2 domain). Interacts with P53/TP53 and MDM2. Interacts with MYLK. Interacts with BCAR1. Interacts with RB1CC1. Interacts with RHOU. Interacts with VAV1. Interacts with PDPK1. Interacts with LPXN and PTPN12. Interacts with SIRPA and SH2D3C. Interacts (hypophosphorylated) with PXN. Interacts with ARHGAP10. Interacts with KCNA2. In terms of processing, phosphorylated on tyrosine residues in response to various stimuli that elevate the intracellular calcium concentration; this activation is indirect and may be mediated by production of reactive oxygen species (ROS). Tyr-402 is the major autophosphorylation site, but other kinases can also phosphorylate Tyr-402. Autophosphorylation occurs in trans, i.e. one subunit of the dimeric receptor phosphorylates tyrosine residues on the other subunit. Phosphorylation at Tyr-402 promotes interaction with SRC and SRC family members, leading to phosphorylation at Tyr-579; Tyr-580 and Tyr-881. Phosphorylation at Tyr-881 is important for interaction with GRB2. Phosphorylated on tyrosine residues upon activation of FGR and PKC. Recruitment by NPHP1 to cell matrix adhesions initiates Tyr-402 phosphorylation. In monocytes, adherence to substrata is required for tyrosine phosphorylation and kinase activation. Angiotensin II, thapsigargin and L-alpha-lysophosphatidic acid (LPA) also induce autophosphorylation and increase kinase activity. Phosphorylation by MYLK promotes ITGB2 activation and is thus essential to trigger neutrophil transmigration during lung injury. Dephosphorylated by PTPN12. In terms of tissue distribution, highly expressed in pulmonary vein endothelial cells, lung and brain (at protein level). Isoform 1 is expressed at high levels in the brain (hippocampus, cerebral cortex and olfactory bulb) and poorly in the spleen and other tissues, whereas isoforms 2 and 3 are expressed in the spleen and brain (highest in cerebellum).

Its subcellular location is the cytoplasm. The protein resides in the perinuclear region. It is found in the cell membrane. The protein localises to the cell projection. It localises to the lamellipodium. Its subcellular location is the cell cortex. The protein resides in the nucleus. It is found in the cell junction. The protein localises to the focal adhesion. The catalysed reaction is L-tyrosyl-[protein] + ATP = O-phospho-L-tyrosyl-[protein] + ADP + H(+). With respect to regulation, activated in response to stimuli that lead to increased intracellular Ca(2+) levels; this activation is indirect and may be mediated by calcium-mediated production of reactive oxygen species (ROS). Activated by autophosphorylation at Tyr-402; this creates a binding site for SRC family kinases and leads to phosphorylation at additional tyrosine residues. Phosphorylation at Tyr-402, Tyr-579 and Tyr-580 is required for optimal kinase activity. Functionally, non-receptor protein-tyrosine kinase that regulates reorganization of the actin cytoskeleton, cell polarization, cell migration, adhesion, spreading and bone remodeling. Plays a role in the regulation of the humoral immune response, and is required for normal levels of marginal B-cells in the spleen and normal migration of splenic B-cells. Required for normal macrophage polarization and migration towards sites of inflammation. Regulates cytoskeleton rearrangement and cell spreading in T-cells, and contributes to the regulation of T-cell responses. Promotes osteoclastic bone resorption; this requires both PTK2B/PYK2 and SRC. May inhibit differentiation and activity of osteoprogenitor cells. Functions in signaling downstream of integrin and collagen receptors, immune receptors, G-protein coupled receptors (GPCR), cytokine, chemokine and growth factor receptors, and mediates responses to cellular stress. Forms multisubunit signaling complexes with SRC and SRC family members upon activation; this leads to the phosphorylation of additional tyrosine residues, creating binding sites for scaffold proteins, effectors and substrates. Regulates numerous signaling pathways. Promotes activation of phosphatidylinositol 3-kinase and of the AKT1 signaling cascade. Promotes activation of NOS3. Regulates production of the cellular messenger cGMP. Promotes activation of the MAP kinase signaling cascade, including activation of MAPK1/ERK2, MAPK3/ERK1 and MAPK8/JNK1. Promotes activation of Rho family GTPases, such as RHOA and RAC1. Recruits the ubiquitin ligase MDM2 to P53/TP53 in the nucleus, and thereby regulates P53/TP53 activity, P53/TP53 ubiquitination and proteasomal degradation. Acts as a scaffold, binding to both PDPK1 and SRC, thereby allowing SRC to phosphorylate PDPK1 at 'Tyr-9, 'Tyr-373', and 'Tyr-376'. Promotes phosphorylation of NMDA receptors by SRC family members, and thereby contributes to the regulation of NMDA receptor ion channel activity and intracellular Ca(2+) levels. May also regulate potassium ion transport by phosphorylation of potassium channel subunits. Phosphorylates SRC; this increases SRC kinase activity. Phosphorylates ASAP1, NPHP1, KCNA2 and SHC1. Promotes phosphorylation of ASAP2, RHOU and PXN; this requires both SRC and PTK2/PYK2. This Rattus norvegicus (Rat) protein is Protein-tyrosine kinase 2-beta (Ptk2b).